The primary structure comprises 72 residues: Translation initiation factor IF-1 (72 aa).

Residues 1–72 (MAKQSAIEKD…SKGRIAFRYK (72 aa)) form the S1-like domain.

The protein belongs to the IF-1 family. Component of the 30S ribosomal translation pre-initiation complex which assembles on the 30S ribosome in the order IF-2 and IF-3, IF-1 and N-formylmethionyl-tRNA(fMet); mRNA recruitment can occur at any time during PIC assembly.

The protein localises to the cytoplasm. Its function is as follows. One of the essential components for the initiation of protein synthesis. Stabilizes the binding of IF-2 and IF-3 on the 30S subunit to which N-formylmethionyl-tRNA(fMet) subsequently binds. Helps modulate mRNA selection, yielding the 30S pre-initiation complex (PIC). Upon addition of the 50S ribosomal subunit IF-1, IF-2 and IF-3 are released leaving the mature 70S translation initiation complex. The sequence is that of Translation initiation factor IF-1 from Parabacteroides distasonis (strain ATCC 8503 / DSM 20701 / CIP 104284 / JCM 5825 / NCTC 11152).